The primary structure comprises 836 residues: Subtilisin-like protease PIMMS2 (836 aa).

Active-site charge relay system residues include Asp-155, His-222, and Ser-414. The tract at residues 802–836 (EKKNKYNNSVLKRNEMKSHNNSQKTPKIIPRKYSR) is disordered.

The protein belongs to the peptidase S8 family.

The protein resides in the cell membrane. It catalyses the reaction Hydrolysis of proteins with broad specificity for peptide bonds, and a preference for a large uncharged residue in P1. Hydrolyzes peptide amides.. Functionally, probable serine protease which plays a role in ookinete traversal of the mosquito host midgut epithelium. The sequence is that of Subtilisin-like protease PIMMS2 from Plasmodium berghei (strain Anka).